We begin with the raw amino-acid sequence, 255 residues long: Complement C1q-like protein 3 (255 aa).

A signal peptide spans 1–20; that stretch reads MVLLLVILIPVLVSSAGTSA. Positions 39–109 are disordered; it reads KAPSTAATPD…GLPGPPGAPG (71 aa). The Collagen-like domain occupies 61–111; sequence GPKGEAGRPGKAGPRGPPGEPGPPGPVGPPGEKGEPGRQGLPGPPGAPGLN. A compositionally biased stretch (pro residues) spans 75-89; it reads RGPPGEPGPPGPVGP. The region spanning 122 to 255 is the C1q domain; it reads STVPKIAFYA…TFSGFIIYAD (134 aa).

In terms of assembly, forms homooligomers. Interacts with ADGRB3. Forms heterooligomers with C1QL2 and C1QL4, when proteins are coexpressed; this interaction does not occur after secretion. Highly expressed in brain and white adipose tissue. In gonadal fat pad, expressed at lower levels in adipocytes than in the stromal vascular fraction (VSP), which contains preadipocytes, fibroblasts, endothelial cells and occasional immune cells. Expression exhibits sexually dimorphism, with higher levels in females than in males (at protein level). Tends to be up-regulated in adipose tissue from obese males, but not females. Expressed in glial cells.

It localises to the secreted. Functionally, may regulate the number of excitatory synapses that are formed on hippocampus neurons. Has no effect on inhibitory synapses. Plays a role in glucose homeostasis. Via AMPK signaling pathway, stimulates glucose uptake in adipocytes, myotubes and hepatocytes and enhances insulin-stimulated glucose uptake. In a hepatoma cell line, reduces the expression of gluconeogenic enzymes G6PC1 and PCK1 and hence decreases de novo glucose production. This Mus musculus (Mouse) protein is Complement C1q-like protein 3 (C1ql3).